The primary structure comprises 273 residues: MSRLNINTKLVRRMLVGFLQDEIWKVGAKKAVLGLSGGIDSALVCHLAAEALGPENVHAICMPYRTSNPESEAHARLVAEASGVQFSVVGITPMVDAYFDQFPDANNMRRGNKMARERMTVLFDHSALYGGLVLGTSNKTELLLGYGTLYGDMASALNPIGDLYKTQVWQLSEEVGVPKPVIEKKPSADLWAGQTDEEELGFTYREVDELLYRMVDQRADTAELVAAGFKQEFVSSIYSKVQNSHFKRRLPVIAKVSGRTIDRDFRYSRDWGK.

34–41 is an ATP binding site; it reads GLSGGIDS. Aspartate 40 is a Mg(2+) binding site. Residue arginine 116 participates in deamido-NAD(+) binding. Threonine 136 is an ATP binding site. Glutamate 141 lines the Mg(2+) pocket. 2 residues coordinate ATP: lysine 165 and serine 187.

Belongs to the NAD synthetase family. Homodimer.

It carries out the reaction deamido-NAD(+) + NH4(+) + ATP = AMP + diphosphate + NAD(+) + H(+). It participates in cofactor biosynthesis; NAD(+) biosynthesis; NAD(+) from deamido-NAD(+) (ammonia route): step 1/1. Functionally, catalyzes the ATP-dependent amidation of deamido-NAD to form NAD. Uses ammonia as a nitrogen source. This Trichlorobacter lovleyi (strain ATCC BAA-1151 / DSM 17278 / SZ) (Geobacter lovleyi) protein is NH(3)-dependent NAD(+) synthetase.